The sequence spans 154 residues: Myoglobin (154 aa).

The region spanning 2–148 (VLSDAEWHLV…FRKDIAAKYK (147 aa)) is the Globin domain. Position 4 is a phosphoserine (Ser-4). Residue His-65 coordinates nitrite. His-65 provides a ligand contact to O2. Residue Thr-68 is modified to Phosphothreonine. His-94 is a heme b binding site.

The protein belongs to the globin family. Monomeric.

The protein resides in the cytoplasm. It is found in the sarcoplasm. The enzyme catalyses Fe(III)-heme b-[protein] + nitric oxide + H2O = Fe(II)-heme b-[protein] + nitrite + 2 H(+). The catalysed reaction is H2O2 + AH2 = A + 2 H2O. Its function is as follows. Monomeric heme protein which primary function is to store oxygen and facilitate its diffusion within muscle tissues. Reversibly binds oxygen through a pentacoordinated heme iron and enables its timely and efficient release as needed during periods of heightened demand. Depending on the oxidative conditions of tissues and cells, and in addition to its ability to bind oxygen, it also has a nitrite reductase activity whereby it regulates the production of bioactive nitric oxide. Under stress conditions, like hypoxia and anoxia, it also protects cells against reactive oxygen species thanks to its pseudoperoxidase activity. This chain is Myoglobin (MB), found in Balaenoptera acutorostrata (Common minke whale).